We begin with the raw amino-acid sequence, 457 residues long: Protein PIN-LIKES 2 (457 aa).

Residues 1-15 lie on the Lumenal side of the membrane; that stretch reads MSGFSSGNVNSRVVD. The chain crosses the membrane as a helical span at residues 16 to 36; the sequence is ILSGVVPLLKLICLTVIGLLL. Over 37–54 the chain is Cytoplasmic; the sequence is AHPKTQLVPRATFRLLSK. Residues 55–75 form a helical membrane-spanning segment; it reads LVFALFLPCLIFTELGESITL. Over 76 to 85 the chain is Lumenal; sequence DNIVQWWFIP. Residues 86 to 106 form a helical membrane-spanning segment; that stretch reads VNVLLSAVVGSLIGYLVVLIC. The Cytoplasmic portion of the chain corresponds to 107 to 116; sequence RPPPEFNRFT. A helical transmembrane segment spans residues 117-137; it reads IVMTAFGNTGNLLLAIVSSVC. Over 138 to 151 the chain is Lumenal; that stretch reads HTKTNPFGPNCNSR. A helical transmembrane segment spans residues 152–172; it reads GVSYVSFAQWVAVILVYTVVY. At 173–291 the chain is on the cytoplasmic side; sequence HMMEPPLEYY…PVKHILQPPT (119 aa). Residues 292-312 form a helical membrane-spanning segment; sequence IASLLAIIIGSVPQLKSVVFG. The Lumenal portion of the chain corresponds to 313–322; that stretch reads YDAPLSFITD. A helical transmembrane segment spans residues 323–343; the sequence is SLNIMGSAMVPSVMLVLGGML. The Cytoplasmic segment spans residues 344–356; that stretch reads SEGPNESTLGLRT. Residues 357–377 form a helical membrane-spanning segment; that stretch reads TIGISVARLLVLPLVGIGIVM. Topologically, residues 378-393 are lumenal; sequence SADKLGLISSADPMFK. Residues 394 to 414 form a helical membrane-spanning segment; it reads FVLLLQYSTPSAILLGAIASL. Over 415–424 the chain is Cytoplasmic; that stretch reads RGYAVREASA. The chain crosses the membrane as a helical span at residues 425–445; that stretch reads LLFWQHIFALLSLTFYIVIFF. Topologically, residues 446 to 457 are lumenal; the sequence is KLTVETTVQGMQ.

This sequence belongs to the auxin efflux carrier (TC 2.A.69.2) family. Expressed in seedlings, rosette and cauline leaves, flowers and siliques.

Its subcellular location is the endoplasmic reticulum membrane. Involved in cellular auxin homeostasis by regulating auxin metabolism. Regulates intracellular auxin accumulation at the endoplasmic reticulum and thus auxin availability for nuclear auxin signaling. The polypeptide is Protein PIN-LIKES 2 (Arabidopsis thaliana (Mouse-ear cress)).